Here is a 452-residue protein sequence, read N- to C-terminus: Maltoporin (452 aa).

A signal peptide spans 1–25; that stretch reads MMITLRKLPLAVAVAAGVMSAQAMA.

Belongs to the porin LamB (TC 1.B.3) family. In terms of assembly, homotrimer formed of three 18-stranded antiparallel beta-barrels, containing three independent channels.

It is found in the cell outer membrane. It carries out the reaction beta-maltose(in) = beta-maltose(out). Its function is as follows. Involved in the transport of maltose and maltodextrins. This chain is Maltoporin, found in Salmonella choleraesuis (strain SC-B67).